Reading from the N-terminus, the 242-residue chain is MTLVYPRRQRQLESLVRKLGLPITAPIKWELLDLALTHPTVSESANYEQLEFVGDAVVRLAAAVMLWETYPDCPVGDFAAIRSVLVSDRILAQLAREYGLELHLLVAGSATSDKIGQESRLADAFEAVLGALYLSTSNLELIRPWLDHHFRQLAAEIRLDPARLNYKAALQEWTQAQFKVLPEYRVVEINQANRTQERFAAEVWLHGNKLGEGKGRSIKAAEQAAAKVAFLAITPPEEIANQ.

Residues 12 to 137 enclose the RNase III domain; that stretch reads LESLVRKLGL…VLGALYLSTS (126 aa). Residue Glu-51 coordinates Mg(2+). Residue Asp-55 is part of the active site. 2 residues coordinate Mg(2+): Asp-123 and Glu-126. Glu-126 is a catalytic residue. A DRBM domain is found at 165-235; that stretch reads NYKAALQEWT…AKVAFLAITP (71 aa).

It belongs to the ribonuclease III family. As to quaternary structure, homodimer. It depends on Mg(2+) as a cofactor.

The protein resides in the cytoplasm. The enzyme catalyses Endonucleolytic cleavage to 5'-phosphomonoester.. Digests double-stranded RNA. Involved in the processing of primary rRNA transcript to yield the immediate precursors to the large and small rRNAs (23S and 16S). Processes some mRNAs, and tRNAs when they are encoded in the rRNA operon. Processes pre-crRNA and tracrRNA of type II CRISPR loci if present in the organism. This is Ribonuclease 3 2 (rnc2) from Nostoc sp. (strain PCC 7120 / SAG 25.82 / UTEX 2576).